The following is a 660-amino-acid chain: MEEEKASAAQSLIDVVNEIAAISDYRITVKKLCYNLARRLKLLVPMFEEIRESNEPISEDTLKTLMNLKEAMCSAKDYLKFCSQGSKIYLVMEREQVTSKLMEVSVKLEQSLSQIPYEELDISDEVREQVELVLSQFRRAKGRVDVSDDELYEDLQSLCNKSSDVDAYQPVLERVAKKLHLMEIPDLAQESVALHEMVASSGGDVGENIEEMAMVLKMIKDFVQTEDDNGEEQKVGVNSRSNGQTSTAASQKIPVIPDDFRCPISLEMMRDPVIVSSGQTYERTCIEKWIEGGHSTCPKTQQALTSTTLTPNYVLRSLIAQWCEANDIEPPKPPSSLRPRKVSSFSSPAEANKIEDLMWRLAYGNPEDQRSAAGEIRLLAKRNADNRVAIAEAGAIPLLVGLLSTPDSRIQEHSVTALLNLSICENNKGAIVSAGAIPGIVQVLKKGSMEARENAAATLFSLSVIDENKVTIGALGAIPPLVVLLNEGTQRGKKDAATALFNLCIYQGNKGKAIRAGVIPTLTRLLTEPGSGMVDEALAILAILSSHPEGKAIIGSSDAVPSLVEFIRTGSPRNRENAAAVLVHLCSGDPQHLVEAQKLGLMGPLIDLAGNGTDRGKRKAAQLLERISRLAEQQKETAVSQPEEEAEPTHPESTTEAADT.

The interval 227 to 252 (DDNGEEQKVGVNSRSNGQTSTAASQK) is disordered. Over residues 236-250 (GVNSRSNGQTSTAAS) the composition is skewed to polar residues. The region spanning 255-329 (VIPDDFRCPI…AQWCEANDIE (75 aa)) is the U-box domain. ARM repeat units follow at residues 384 to 423 (ADNR…NLSI), 425 to 464 (ENNK…SLSV), 466 to 505 (DENK…NLCI), 507 to 546 (QGNK…ILSS), and 548 to 587 (PEGK…HLCS). Residues 631-660 (AEQQKETAVSQPEEEAEPTHPESTTEAADT) are disordered. Residues 651-660 (PESTTEAADT) are compositionally biased toward polar residues.

In terms of assembly, binds to SD11, SD16, SD17, SD18, SD113, SD129 and SD25. In terms of processing, phosphorylated by SD1-6 and SD1-7.

It is found in the nucleus. The protein localises to the cytoplasm. It catalyses the reaction S-ubiquitinyl-[E2 ubiquitin-conjugating enzyme]-L-cysteine + [acceptor protein]-L-lysine = [E2 ubiquitin-conjugating enzyme]-L-cysteine + N(6)-ubiquitinyl-[acceptor protein]-L-lysine.. Its pathway is protein modification; protein ubiquitination. In terms of biological role, functions as an E3 ubiquitin ligase. The protein is U-box domain-containing protein 13 (PUB13) of Arabidopsis thaliana (Mouse-ear cress).